Here is a 309-residue protein sequence, read N- to C-terminus: Porphobilinogen deaminase (309 aa).

At Cys-242 the chain carries S-(dipyrrolylmethanemethyl)cysteine.

This sequence belongs to the HMBS family. In terms of assembly, monomer. Dipyrromethane is required as a cofactor.

It catalyses the reaction 4 porphobilinogen + H2O = hydroxymethylbilane + 4 NH4(+). Its pathway is porphyrin-containing compound metabolism; protoporphyrin-IX biosynthesis; coproporphyrinogen-III from 5-aminolevulinate: step 2/4. Functionally, tetrapolymerization of the monopyrrole PBG into the hydroxymethylbilane pre-uroporphyrinogen in several discrete steps. This chain is Porphobilinogen deaminase, found in Legionella pneumophila subsp. pneumophila (strain Philadelphia 1 / ATCC 33152 / DSM 7513).